Here is a 512-residue protein sequence, read N- to C-terminus: Alpha-amylase 1 (512 aa).

The signal sequence occupies residues 1-25; that stretch reads MRFSTEGFTSKVVAAILAFSRLVSA. Cysteine 66 and cysteine 74 are disulfide-bonded. Residue tryptophan 119 participates in substrate binding. Asparagine 157 is a Ca(2+) binding site. Histidine 158 is a substrate binding site. Cysteine 186 and cysteine 200 are joined by a disulfide. Ca(2+) contacts are provided by glutamate 198 and aspartate 211. Asparagine 233 carries an N-linked (GlcNAc...) asparagine glycan. Arginine 240 is a binding site for substrate. Residues aspartate 242, histidine 246, and glutamate 266 each coordinate Ca(2+). Aspartate 242 functions as the Nucleophile in the catalytic mechanism. 245–246 is a substrate binding site; the sequence is KH. Glutamate 266 acts as the Proton donor in catalysis. Glycine 270 contacts substrate. Cysteine 276 and cysteine 319 form a disulfide bridge. 2 residues coordinate substrate: aspartate 333 and arginine 380. A disulfide bridge links cysteine 475 with cysteine 510.

This sequence belongs to the glycosyl hydrolase 13 family. Ca(2+) is required as a cofactor.

It localises to the secreted. It carries out the reaction Endohydrolysis of (1-&gt;4)-alpha-D-glucosidic linkages in polysaccharides containing three or more (1-&gt;4)-alpha-linked D-glucose units.. With respect to regulation, alpha-amylase expression underlies catabolite repression by glucose. The chain is Alpha-amylase 1 (AMY1) from Schwanniomyces occidentalis (Yeast).